The chain runs to 52 residues: Venom peptide 4b (52 aa).

The signal sequence occupies residues 1 to 23 (MRSAILLVIVAIVAILGFLGVNA). 3 AXPX repeats span residues 23 to 26 (AEPL), 31 to 34 (AEPN), and 39 to 42 (AAPL). The propeptide occupies 24–41 (EPLPSPLAEPNPHAKAAP). The interval 30 to 52 (LAEPNPHAKAAPLSPAAMASLAG) is disordered. Residues 37 to 52 (AKAAPLSPAAMASLAG) show a composition bias toward low complexity. Ala-51 is modified (alanine amide).

Expressed by the venom gland.

The protein resides in the secreted. This chain is Venom peptide 4b, found in Eumenes pomiformis (Potter wasp).